Consider the following 1103-residue polypeptide: PH, RCC1 and FYVE domains-containing protein 1 (1103 aa).

The 102-residue stretch at 22–123 (KKGTQLLKYG…IWIGGLKTLI (102 aa)) folds into the PH domain. Positions 144-233 (DASRELTSSS…SSSHGSAADD (90 aa)) are disordered. Composition is skewed to low complexity over residues 151 to 169 (SSSPSSSSASASRGHSSPG) and 217 to 231 (SVSSAQSSSSHGSAA). RCC1 repeat units follow at residues 237–298 (LGDV…FVTR), 299–351 (QGEI…AVTL), 353–406 (GELY…LITS), 407–458 (YGRL…AVVE), 471–522 (SGKL…GLTT), 524–574 (GQVF…ALTS), and 575–626 (RNEV…AICL). Residues 632–694 (GAEQSQCSTC…VCDSCYVKLS (63 aa)) form an FYVE-type zinc finger. Zn(2+) is bound by residues Cys638, Cys641, Cys654, Cys657, Cys662, Cys665, Cys686, and Cys689. The disordered stretch occupies residues 783 to 818 (ATPKLAQAPSGISSRSVSPFSRRSSPPRSATPMPST). Over residues 791-818 (PSGISSRSVSPFSRRSSPPRSATPMPST) the composition is skewed to low complexity. Residues 828 to 904 (ADNMKKTNEI…IAQLKDVAEK (77 aa)) adopt a coiled-coil conformation. Residues 962-979 (NLQSPKQTPRASERNSNA) show a composition bias toward polar residues. A disordered region spans residues 962–988 (NLQSPKQTPRASERNSNAYPADPRLSS). The 56-residue stretch at 1023 to 1078 (AEWIEQYEPGVYITLVALHDGTRDLRRVRFSRRRFGEHQAETWWSENREKVYEKYN) folds into the BRX domain. Residues 1079–1103 (VRVSEKSTASQTHRDRDEEEEDIPH) form a disordered region.

As to expression, mostly expressed in flowers, and, to a lower extent, in stems, leaves, siliques, seeds.

Functionally, binds to phosphatidic acid and to phosphoinositides such as PtdIns3P, PtdIns(3,4)P(2), PtdIns(3,4,5)P(3) and PtdIns(4,5)P(2). Catalyzes guanine nucleotide exchange on specific Rab proteins. This is PH, RCC1 and FYVE domains-containing protein 1 from Arabidopsis thaliana (Mouse-ear cress).